Here is a 211-residue protein sequence, read N- to C-terminus: MTTLTRQDLNFGQVVADVLCEFLEVAVHLILYVREVYPVGIFQKRKKYNVPVQMSCHPELNQYIQDTLHCVKPLLEKNDVEKVVVVILDKEHRPVEKFVFEITQPPLLSISSDSLLSHVEQLLRAFILKISVCDAVLDHNPPGCTFTVLVHTREAATRNMEKIQVIKDFPWILADEQDVHMHDPRLIPLKTMTSDILKMQLYVEERAHKGS.

The region spanning 13-203 (QVVADVLCEF…SDILKMQLYV (191 aa)) is the HORMA domain. The segment at 21–155 (EFLEVAVHLI…FTVLVHTREA (135 aa)) is mediates interaction with REV1 and REV3L and homodimerization. Positions 150-211 (VHTREAATRN…YVEERAHKGS (62 aa)) are mediates interaction with ipaB.

As to quaternary structure, homooligomer. Heterodimer with REV3L. This dimer forms the minimal DNA polymerase zeta complex (Pol-zeta2), with REV3L bearing DNA polymerase catalytic activity, although its activity is very low in this context. Component of the tetrameric Pol-zeta complex (Pol-zeta4), which consists of REV3L, MAD2L2, POLD2 and POLD3; Pol-zeta4 is the fully active form of DNA polymerase zeta. Component of the shieldin complex, consisting of SHLD1, SHLD2, SHLD3 and MAD2L2/REV7. Within the complex, SHLD2 forms a scaffold which interacts with a SHLD3-MAD2L2 subcomplex via its N-terminus, and with SHLD1 via its C-terminus. Interacts with REV1. Interacts with ADAM9. Interacts with CHAMP1. Interacts with FZR1 (in complex with the anaphase promoting complex APC). Interacts with CDC20; PubMed:11459825 could not detect the interaction. Interacts with RAN. Interacts with ELK1; the interaction is direct and recruits MAD2L2 to ELK1-specific promoters. May interact with the JNK kinases MAPK8 and/or MAPK9 to stimulate ELK1 phosphorylation and transcriptional activity upon DNA damage. Interacts with TCF7L2; prevents its binding to promoters and negatively modulates its transcriptional activity. Interacts with YY1AP1. Interacts with S.flexneri protein ipaB; prevents the interaction of MAD2L2 with FZR1 and CDC20 resulting in an activation of the anaphase-promoting complex APC and a cell cycle arrest. Interacts with PRCC; the interaction is direct. Interacts with POGZ. Interacts with ASTE1. In terms of tissue distribution, ubiquitously expressed.

It is found in the nucleus. The protein resides in the cytoplasm. Its subcellular location is the cytoskeleton. The protein localises to the spindle. It localises to the chromosome. Its function is as follows. Adapter protein able to interact with different proteins and involved in different biological processes. Mediates the interaction between the error-prone DNA polymerase zeta catalytic subunit REV3L and the inserter polymerase REV1, thereby mediating the second polymerase switching in translesion DNA synthesis. Translesion DNA synthesis releases the replication blockade of replicative polymerases, stalled in presence of DNA lesions. Component of the shieldin complex, which plays an important role in repair of DNA double-stranded breaks (DSBs). During G1 and S phase of the cell cycle, the complex functions downstream of TP53BP1 to promote non-homologous end joining (NHEJ) and suppress DNA end resection. Mediates various NHEJ-dependent processes including immunoglobulin class-switch recombination, and fusion of unprotected telomeres. May also regulate another aspect of cellular response to DNA damage through regulation of the JNK-mediated phosphorylation and activation of the transcriptional activator ELK1. Inhibits the FZR1- and probably CDC20-mediated activation of the anaphase promoting complex APC thereby regulating progression through the cell cycle. Regulates TCF7L2-mediated gene transcription and may play a role in epithelial-mesenchymal transdifferentiation. In Homo sapiens (Human), this protein is Mitotic spindle assembly checkpoint protein MAD2B (MAD2L2).